A 535-amino-acid polypeptide reads, in one-letter code: Dimethylaniline monooxygenase [N-oxide-forming] 2 (535 aa).

An N-acetylalanine modification is found at Ala2. Residues Gly9–Ser13, Glu32, Val40–Trp41, and Asn61–Thr62 contribute to the FAD site. NADP(+) contacts are provided by residues Thr60–Asn61 and Ser195–Asp198. Lys492 is covalently cross-linked (Glycyl lysine isopeptide (Lys-Gly) (interchain with G-Cter in SUMO)). A helical transmembrane segment spans residues Phe510–Cys530.

It belongs to the FMO family. Requires FAD as cofactor. It depends on Mg(2+) as a cofactor.

It is found in the microsome membrane. The protein localises to the endoplasmic reticulum membrane. The enzyme catalyses N,N-dimethylaniline + NADPH + O2 + H(+) = N,N-dimethylaniline N-oxide + NADP(+) + H2O. In terms of biological role, catalyzes the oxidative metabolism of numerous xenobiotics, including mainly therapeutic drugs and insecticides that contain a soft nucleophile, most commonly nitrogen and sulfur and participates to their bioactivation. This chain is Dimethylaniline monooxygenase [N-oxide-forming] 2, found in Macaca mulatta (Rhesus macaque).